Consider the following 122-residue polypeptide: uncharacterized protein (122 aa).

It to B.subtilis YpdA.

This is an uncharacterized protein from Bacillus licheniformis.